The primary structure comprises 138 residues: Basic phospholipase A2 homolog Ts-K49a (138 aa).

The signal sequence occupies residues 1–16 (MRTLWIMAVLLLGVEG). Cystine bridges form between C42/C131, C44/C60, C59/C111, C65/C138, C66/C104, C73/C97, and C91/C102. Residues 121–133 (KKKKINLKLFCKK) form an important for membrane-damaging activities in eukaryotes and bacteria; heparin-binding region.

In terms of tissue distribution, expressed by the venom gland.

It is found in the secreted. In terms of biological role, snake venom phospholipase A2 homolog that lacks catalytic activity. It shows myotoxic and weak anticoagulant activities and induces local edema a few hours after injection (5-10 ug) in the hind paw. A model of myotoxic mechanism has been proposed: an apo Lys49-PLA2 is activated by the entrance of a hydrophobic molecule (e.g. fatty acid) at the hydrophobic channel of the protein leading to a reorientation of a monomer. This reorientation causes a transition between 'inactive' to 'active' states, causing alignment of C-terminal and membrane-docking sites (MDoS) side-by-side and putting the membrane-disruption sites (MDiS) in the same plane, exposed to solvent and in a symmetric position for both monomers. The MDoS region stabilizes the toxin on membrane by the interaction of charged residues with phospholipid head groups. Subsequently, the MDiS region destabilizes the membrane with penetration of hydrophobic residues. This insertion causes a disorganization of the membrane, allowing an uncontrolled influx of ions (i.e. calcium and sodium), and eventually triggering irreversible intracellular alterations and cell death. The sequence is that of Basic phospholipase A2 homolog Ts-K49a from Trimeresurus stejnegeri (Chinese green tree viper).